The chain runs to 83 residues: Sec-independent protein translocase protein TatA (83 aa).

A helical transmembrane segment spans residues 1–21; that stretch reads MGSFSIWHWLIVLLIVVMVFG. The interval 44–83 is disordered; sequence KDGGQSAAATDDKPAAPAGQVTNAQASDKTTIDVEARQKS. The segment covering 63–72 has biased composition (polar residues); it reads QVTNAQASDK. Positions 73 to 83 are enriched in basic and acidic residues; sequence TTIDVEARQKS.

The protein belongs to the TatA/E family. The Tat system comprises two distinct complexes: a TatABC complex, containing multiple copies of TatA, TatB and TatC subunits, and a separate TatA complex, containing only TatA subunits. Substrates initially bind to the TatABC complex, which probably triggers association of the separate TatA complex to form the active translocon.

It is found in the cell inner membrane. Part of the twin-arginine translocation (Tat) system that transports large folded proteins containing a characteristic twin-arginine motif in their signal peptide across membranes. TatA could form the protein-conducting channel of the Tat system. In Polaromonas sp. (strain JS666 / ATCC BAA-500), this protein is Sec-independent protein translocase protein TatA.